A 363-amino-acid polypeptide reads, in one-letter code: Carbamoyl phosphate synthase small chain (363 aa).

A CPSase region spans residues 1 to 172; it reads MTKRILMLED…AFASPGDGKR (172 aa). L-glutamine is bound by residues Ser-46, Gly-220, and Gly-222. Residues 172–359 enclose the Glutamine amidotransferase type-1 domain; that stretch reads RVVLVDYGVK…MEMMNGKEEG (188 aa). Cys-247 serves as the catalytic Nucleophile. Residues Leu-248, Gln-251, Asn-289, Gly-291, and Tyr-292 each contribute to the L-glutamine site. Residues His-332 and Glu-334 contribute to the active site.

It belongs to the CarA family. Composed of two chains; the small (or glutamine) chain promotes the hydrolysis of glutamine to ammonia, which is used by the large (or ammonia) chain to synthesize carbamoyl phosphate. Tetramer of heterodimers (alpha,beta)4.

The enzyme catalyses hydrogencarbonate + L-glutamine + 2 ATP + H2O = carbamoyl phosphate + L-glutamate + 2 ADP + phosphate + 2 H(+). The catalysed reaction is L-glutamine + H2O = L-glutamate + NH4(+). The protein operates within amino-acid biosynthesis; L-arginine biosynthesis; carbamoyl phosphate from bicarbonate: step 1/1. Its pathway is pyrimidine metabolism; UMP biosynthesis via de novo pathway; (S)-dihydroorotate from bicarbonate: step 1/3. Small subunit of the glutamine-dependent carbamoyl phosphate synthetase (CPSase). CPSase catalyzes the formation of carbamoyl phosphate from the ammonia moiety of glutamine, carbonate, and phosphate donated by ATP, constituting the first step of 2 biosynthetic pathways, one leading to arginine and/or urea and the other to pyrimidine nucleotides. The small subunit (glutamine amidotransferase) binds and cleaves glutamine to supply the large subunit with the substrate ammonia. The chain is Carbamoyl phosphate synthase small chain from Listeria monocytogenes serotype 4b (strain F2365).